Here is a 295-residue protein sequence, read N- to C-terminus: Phosphatidylserine decarboxylase proenzyme (295 aa).

Residues Asp-113, His-169, and Ser-256 each act as charge relay system; for autoendoproteolytic cleavage activity in the active site. Ser-256 functions as the Schiff-base intermediate with substrate; via pyruvic acid; for decarboxylase activity in the catalytic mechanism. Ser-256 is subject to Pyruvic acid (Ser); by autocatalysis.

Belongs to the phosphatidylserine decarboxylase family. PSD-B subfamily. Prokaryotic type II sub-subfamily. In terms of assembly, heterodimer of a large membrane-associated beta subunit and a small pyruvoyl-containing alpha subunit. Pyruvate serves as cofactor. In terms of processing, is synthesized initially as an inactive proenzyme. Formation of the active enzyme involves a self-maturation process in which the active site pyruvoyl group is generated from an internal serine residue via an autocatalytic post-translational modification. Two non-identical subunits are generated from the proenzyme in this reaction, and the pyruvate is formed at the N-terminus of the alpha chain, which is derived from the carboxyl end of the proenzyme. The autoendoproteolytic cleavage occurs by a canonical serine protease mechanism, in which the side chain hydroxyl group of the serine supplies its oxygen atom to form the C-terminus of the beta chain, while the remainder of the serine residue undergoes an oxidative deamination to produce ammonia and the pyruvoyl prosthetic group on the alpha chain. During this reaction, the Ser that is part of the protease active site of the proenzyme becomes the pyruvoyl prosthetic group, which constitutes an essential element of the active site of the mature decarboxylase.

Its subcellular location is the cell membrane. It catalyses the reaction a 1,2-diacyl-sn-glycero-3-phospho-L-serine + H(+) = a 1,2-diacyl-sn-glycero-3-phosphoethanolamine + CO2. It participates in phospholipid metabolism; phosphatidylethanolamine biosynthesis; phosphatidylethanolamine from CDP-diacylglycerol: step 2/2. Its function is as follows. Catalyzes the formation of phosphatidylethanolamine (PtdEtn) from phosphatidylserine (PtdSer). The sequence is that of Phosphatidylserine decarboxylase proenzyme from Clostridium botulinum (strain 657 / Type Ba4).